A 1727-amino-acid polypeptide reads, in one-letter code: DNA-directed RNA polymerase II subunit rpb1 (1727 aa).

The Zn(2+) site is built by C66, C69, C76, H79, C106, C109, C147, and C175. D486, D488, and D490 together coordinate Mg(2+). The interval 819–831 (PQEFFFHAMGGRE) is bridging helix. A Glycyl lysine isopeptide (Lys-Gly) (interchain with G-Cter in ubiquitin) cross-link involves residue K1266. Disordered stretches follow at residues 1478 to 1512 (EPSNVSYPDTPGSQTPSYSYGDGSTTPFHNPYDAP) and 1551 to 1727 (PTYS…NKKK). Positions 1480 to 1505 (SNVSYPDTPGSQTPSYSYGDGSTTPF) are enriched in polar residues. Tandem repeats lie at residues 1553–1559 (YSPTSPS), 1560–1566 (YSPTSPS), 1567–1573 (YSPTSPS), 1574–1580 (YSPTSPS), 1581–1587 (YSPTSPS), 1588–1594 (YSPTSPS), 1595–1601 (YSPTSPF), 1602–1608 (YSPTSPS), 1609–1615 (YSPTSPS), 1616–1622 (YSPTSPS), 1623–1629 (YSPTSPS), 1630–1636 (YSPTSPS), 1637–1643 (YSPTSPS), 1644–1650 (YSPTSPS), 1651–1657 (YSPTSPS), 1658–1664 (YSPTSPS), 1665–1671 (YSPTSPS), 1672–1678 (YSPTSPS), 1679–1685 (YSPTSPS), 1686–1692 (YSPSSPS), 1693–1699 (YSPSSPS), 1700–1706 (YSPSSPS), and 1707–1713 (YSPSSPT). Positions 1553–1713 (YSPTSPSYSP…SPSYSPSSPT (161 aa)) are C-terminal domain (CTD); 23 X 7 AA tandem repeats of Y-S-P-[ST]-S-P-[FST].

This sequence belongs to the RNA polymerase beta' chain family. In terms of assembly, component of the RNA polymerase II (Pol II) complex consisting of 12 subunits. The tandem heptapeptide repeats in the C-terminal domain (CTD) can be highly phosphorylated. The phosphorylation activates Pol II. Phosphorylation occurs mainly at residues 'Ser-2' and 'Ser-5' of the heptapeptide repeat. The phosphorylation state is believed to result from the balanced action of site-specific CTD kinases and phosphatase, and a 'CTD code' that specifies the position of Pol II within the transcription cycle has been proposed. In terms of processing, following transcription stress, the elongating form of RNA polymerase II (RNA pol IIo) is polyubiquitinated via 'Lys-63'-linkages on Lys-1266 at DNA damage sites without leading to degradation: ubiquitination promotes RNA pol IIo backtracking to allow access by the transcription-coupled nucleotide excision repair (TC-NER) machinery. Subsequent DEF1-dependent polyubiquitination by the elongin complex via 'Lys-48'-linkages may lead to proteasome-mediated degradation; presumably at stalled RNA pol II where TC-NER has failed, to halt global transcription and enable 'last resort' DNA repair pathways.

The protein localises to the nucleus. The enzyme catalyses RNA(n) + a ribonucleoside 5'-triphosphate = RNA(n+1) + diphosphate. DNA-dependent RNA polymerase catalyzes the transcription of DNA into RNA using the four ribonucleoside triphosphates as substrates. Largest and catalytic component of RNA polymerase II which synthesizes mRNA precursors and many functional non-coding RNAs. Forms the polymerase active center together with the second largest subunit. Pol II is the central component of the basal RNA polymerase II transcription machinery. It is composed of mobile elements that move relative to each other. RPB1 is part of the core element with the central large cleft, the clamp element that moves to open and close the cleft and the jaws that are thought to grab the incoming DNA template. At the start of transcription, a single-stranded DNA template strand of the promoter is positioned within the central active site cleft of Pol II. A bridging helix emanates from RPB1 and crosses the cleft near the catalytic site and is thought to promote translocation of Pol II by acting as a ratchet that moves the RNA-DNA hybrid through the active site by switching from straight to bent conformations at each step of nucleotide addition. During transcription elongation, Pol II moves on the template as the transcript elongates. Elongation is influenced by the phosphorylation status of the C-terminal domain (CTD) of Pol II largest subunit (RPB1), which serves as a platform for assembly of factors that regulate transcription initiation, elongation, termination and mRNA processing. The chain is DNA-directed RNA polymerase II subunit rpb1 (polr2a) from Dictyostelium discoideum (Social amoeba).